Here is a 448-residue protein sequence, read N- to C-terminus: Probable D-serine dehydratase (448 aa).

At K119 the chain carries N6-(pyridoxal phosphate)lysine.

It belongs to the serine/threonine dehydratase family. DsdA subfamily. Pyridoxal 5'-phosphate is required as a cofactor.

The catalysed reaction is D-serine = pyruvate + NH4(+). This is Probable D-serine dehydratase from Pseudomonas aeruginosa (strain ATCC 15692 / DSM 22644 / CIP 104116 / JCM 14847 / LMG 12228 / 1C / PRS 101 / PAO1).